The following is a 1460-amino-acid chain: DNA-directed RNA polymerase III subunit RPC1 (1460 aa).

Zn(2+)-binding residues include cysteine 67, cysteine 70, cysteine 77, histidine 80, cysteine 107, cysteine 110, and cysteine 154. Residues aspartate 511, aspartate 513, and aspartate 515 each contribute to the Mg(2+) site. The bridging helix stretch occupies residues 858 to 870; the sequence is PPEFLFHAISGRE.

The protein belongs to the RNA polymerase beta' chain family. As to quaternary structure, component of the RNA polymerase III (Pol III) complex consisting of 17 subunits.

Its subcellular location is the nucleus. The catalysed reaction is RNA(n) + a ribonucleoside 5'-triphosphate = RNA(n+1) + diphosphate. In terms of biological role, DNA-dependent RNA polymerase catalyzes the transcription of DNA into RNA using the four ribonucleoside triphosphates as substrates. Largest and catalytic core component of RNA polymerase III which synthesizes small RNAs, such as 5S rRNA and tRNAs. Forms the polymerase active center together with the second largest subunit. A single-stranded DNA template strand of the promoter is positioned within the central active site cleft of Pol III. A bridging helix emanates from RPC1 and crosses the cleft near the catalytic site and is thought to promote translocation of Pol III by acting as a ratchet that moves the RNA-DNA hybrid through the active site by switching from straight to bent conformations at each step of nucleotide addition. The protein is DNA-directed RNA polymerase III subunit RPC1 (RPO31) of Saccharomyces cerevisiae (strain ATCC 204508 / S288c) (Baker's yeast).